The primary structure comprises 943 residues: WD repeat-containing protein 3 (943 aa).

WD repeat units lie at residues 21-60 (SQKG…KILI), 63-102 (GLKQ…GNVT), 105-144 (GHKA…GLYR), 147-186 (GHKD…CFKT), and 189-228 (GHRT…EIED). A phosphoserine mark is found at S240 and S241. Phosphothreonine is present on T257. A WD 6 repeat occupies 277–316 (EGRDRVVNLAVDKTGRILACHGTDSVLELFCILSKKEIQK). The disordered stretch occupies residues 326 to 345 (RKKAKLHSSKGEEEDPEVNV). WD repeat units lie at residues 413–451 (GHRS…CIRT), 453–493 (TCEY…ETID), 494–533 (AHDG…DENS), 547–586 (QLDE…FFLS), 589–630 (GHKL…KSLF), 631–670 (AHDD…HIQT), and 673–712 (GHHQ…LILE). Glycyl lysine isopeptide (Lys-Gly) (interchain with G-Cter in SUMO2) cross-links involve residues K474 and K529. The residue at position 726 (S726) is a Phosphoserine.

The protein belongs to the WD repeat WDR3/UTP12 family. As to quaternary structure, part of the small subunit (SSU) processome, composed of more than 70 proteins and the RNA chaperone small nucleolar RNA (snoRNA) U3. Ubiquitous.

It is found in the nucleus. Its subcellular location is the nucleolus. Part of the small subunit (SSU) processome, first precursor of the small eukaryotic ribosomal subunit. During the assembly of the SSU processome in the nucleolus, many ribosome biogenesis factors, an RNA chaperone and ribosomal proteins associate with the nascent pre-rRNA and work in concert to generate RNA folding, modifications, rearrangements and cleavage as well as targeted degradation of pre-ribosomal RNA by the RNA exosome. The sequence is that of WD repeat-containing protein 3 from Homo sapiens (Human).